Consider the following 386-residue polypeptide: 8-amino-7-oxononanoate synthase (386 aa).

Arg-26 contributes to the substrate binding site. 104–105 is a pyridoxal 5'-phosphate binding site; sequence GY. Residue His-129 participates in substrate binding. Pyridoxal 5'-phosphate contacts are provided by Ser-176, His-204, and Thr-232. Position 235 is an N6-(pyridoxal phosphate)lysine (Lys-235). Substrate is bound at residue Thr-349.

It belongs to the class-II pyridoxal-phosphate-dependent aminotransferase family. BioF subfamily. In terms of assembly, homodimer. Pyridoxal 5'-phosphate serves as cofactor.

It carries out the reaction 6-carboxyhexanoyl-[ACP] + L-alanine + H(+) = (8S)-8-amino-7-oxononanoate + holo-[ACP] + CO2. It participates in cofactor biosynthesis; biotin biosynthesis. Its function is as follows. Catalyzes the decarboxylative condensation of pimeloyl-[acyl-carrier protein] and L-alanine to produce 8-amino-7-oxononanoate (AON), [acyl-carrier protein], and carbon dioxide. This Chromohalobacter salexigens (strain ATCC BAA-138 / DSM 3043 / CIP 106854 / NCIMB 13768 / 1H11) protein is 8-amino-7-oxononanoate synthase.